Consider the following 333-residue polypeptide: Protein FAM170A (333 aa).

3 disordered regions span residues 1-45, 73-107, and 143-214; these read MKRR…GVGE, LQDS…PSYK, and ETSE…AKTP. The segment covering 10 to 29 has biased composition (basic and acidic residues); the sequence is LEIEESKEAGISKSQEDISH. Over residues 92-105 the composition is skewed to low complexity; that stretch reads TTAPSQQASSSCPS. The span at 143 to 156 shows a compositional bias: basic and acidic residues; it reads ETSESLEKQPRMEE. Polar residues predominate over residues 170–179; the sequence is SDVSTRNLLS. Residues 185 to 196 are compositionally biased toward basic and acidic residues; the sequence is GEEKEHEEKPES. T213 carries the phosphothreonine modification. Residues 224 to 248 form a C2H2-type; degenerate zinc finger; sequence FRCMACCRVFATMESLQEHVQYGIR. Positions 267-333 are disordered; that stretch reads MESESTQEEE…RKDHCDNSGS (67 aa). Acidic residues predominate over residues 271-281; that stretch reads STQEEEEDHTE. Positions 282 to 293 are enriched in basic and acidic residues; it reads ETEKPKEEKAEE. S308 is modified (phosphoserine).

It belongs to the FAM170 family. In terms of tissue distribution, testis-specific.

It localises to the nucleus. Acts as a nuclear transcription factor that positively regulates the expression of heat shock genes. Binds to heat shock promoter elements (HSE). This Mus musculus (Mouse) protein is Protein FAM170A (Fam170a).